The following is a 341-amino-acid chain: tRNA N6-adenosine threonylcarbamoyltransferase (341 aa).

Positions 115 and 119 each coordinate Fe cation. Substrate contacts are provided by residues L138–G142, D171, G184, and N276. D304 provides a ligand contact to Fe cation.

It belongs to the KAE1 / TsaD family. Fe(2+) is required as a cofactor.

It localises to the cytoplasm. The enzyme catalyses L-threonylcarbamoyladenylate + adenosine(37) in tRNA = N(6)-L-threonylcarbamoyladenosine(37) in tRNA + AMP + H(+). Its function is as follows. Required for the formation of a threonylcarbamoyl group on adenosine at position 37 (t(6)A37) in tRNAs that read codons beginning with adenine. Is involved in the transfer of the threonylcarbamoyl moiety of threonylcarbamoyl-AMP (TC-AMP) to the N6 group of A37, together with TsaE and TsaB. TsaD likely plays a direct catalytic role in this reaction. The chain is tRNA N6-adenosine threonylcarbamoyltransferase from Stenotrophomonas maltophilia (strain R551-3).